A 333-amino-acid polypeptide reads, in one-letter code: Foldase protein PrsA (333 aa).

Positions 1-22 (MKKSTKLLAGIVTLASAMTLAA) are cleaved as a signal peptide. C23 is lipidated: N-palmitoyl cysteine. Residue C23 is the site of S-diacylglycerol cysteine attachment. A PpiC domain is found at 145–240 (TPEMTTQVIT…NKFYIVKVTK (96 aa)). The tract at residues 301-333 (DKKASKANTSKSDQKTSSDSSKDSQSSKSKSEK) is disordered. Over residues 312–322 (SDQKTSSDSSK) the composition is skewed to basic and acidic residues. Over residues 323–333 (DSQSSKSKSEK) the composition is skewed to low complexity.

The protein belongs to the PrsA family.

It is found in the cell membrane. The catalysed reaction is [protein]-peptidylproline (omega=180) = [protein]-peptidylproline (omega=0). Its function is as follows. Plays a major role in protein secretion by helping the post-translocational extracellular folding of several secreted proteins. In Streptococcus equi subsp. zooepidemicus (strain H70), this protein is Foldase protein PrsA.